Reading from the N-terminus, the 301-residue chain is Putative S-adenosyl-L-methionine-dependent methyltransferase BCG_0775c (301 aa).

S-adenosyl-L-methionine-binding positions include D130 and 159 to 160; that span reads DL.

This sequence belongs to the UPF0677 family.

Exhibits S-adenosyl-L-methionine-dependent methyltransferase activity. The sequence is that of Putative S-adenosyl-L-methionine-dependent methyltransferase BCG_0775c from Mycobacterium bovis (strain BCG / Pasteur 1173P2).